Reading from the N-terminus, the 298-residue chain is Lactose transport system permease protein LacF (298 aa).

6 helical membrane passes run 17–37 (GWLF…YPIL), 77–97 (VIFF…LAAM), 112–132 (MIFL…KSMF), 151–171 (PIGW…AITW), 208–228 (AFLT…TSTI), and 269–289 (FSYA…LSFL). The region spanning 73 to 290 (LQNTVIFFVV…LMVAVLSFLQ (218 aa)) is the ABC transmembrane type-1 domain.

It belongs to the binding-protein-dependent transport system permease family. MalFG subfamily.

The protein localises to the cell inner membrane. Part of the binding-protein-dependent transport system for lactose. Probably responsible for the translocation of the substrate across the membrane. This Rhizobium radiobacter (Agrobacterium tumefaciens) protein is Lactose transport system permease protein LacF (lacF).